Here is a 78-residue protein sequence, read N- to C-terminus: Large ribosomal subunit protein bL28 (78 aa).

This sequence belongs to the bacterial ribosomal protein bL28 family.

The chain is Large ribosomal subunit protein bL28 from Pseudoalteromonas atlantica (strain T6c / ATCC BAA-1087).